Consider the following 425-residue polypeptide: Polyribonucleotide 5'-hydroxyl-kinase Clp1 (425 aa).

Residues Glu-22, Lys-62, and 124 to 129 contribute to the ATP site; that span reads DVGKST.

Belongs to the Clp1 family. Clp1 subfamily. Component of the tRNA splicing endonuclease complex, composed of CLP1, TSEN2, TSEN15, TSEN34 and TSEN54. Component of pre-mRNA cleavage complex II (CF-II). Also associates with numerous components of the pre-mRNA cleavage complex I (CF-I/CFIm), including NUDT21, CPSF2, CPSF3, CPSF6 and CPSF7. Interacts with CSTF2 and SYMPK. It depends on Mg(2+) as a cofactor. Mn(2+) serves as cofactor. Requires Ni(2+) as cofactor.

The protein localises to the nucleus. The catalysed reaction is a 5'-end dephospho-2'-deoxyribonucleoside-DNA + ATP = a 5'-end 5'-phospho-2'-deoxyribonucleoside-DNA + ADP + H(+). It carries out the reaction a 5'-end dephospho-ribonucleoside-RNA + ATP = a 5'-end 5'-phospho-ribonucleoside-RNA + ADP + H(+). Functionally, polynucleotide kinase that can phosphorylate the 5'-hydroxyl groups of double-stranded RNA (dsRNA), single-stranded RNA (ssRNA), double-stranded DNA (dsDNA) and double-stranded DNA:RNA hybrids. dsRNA is phosphorylated more efficiently than dsDNA, and the RNA component of a DNA:RNA hybrid is phosphorylated more efficiently than the DNA component. Plays a key role in both tRNA splicing and mRNA 3'-end formation. Component of the tRNA splicing endonuclease complex: phosphorylates the 5'-terminus of the tRNA 3'-exon during tRNA splicing; this phosphorylation event is a prerequisite for the subsequent ligation of the two exon halves and the production of a mature tRNA. Its role in tRNA splicing and maturation is required for cerebellar development. Component of the pre-mRNA cleavage complex II (CF-II), which seems to be required for mRNA 3'-end formation. Also phosphorylates the 5'-terminus of exogenously introduced short interfering RNAs (siRNAs), which is a necessary prerequisite for their incorporation into the RNA-induced silencing complex (RISC). However, endogenous siRNAs and microRNAs (miRNAs) that are produced by the cleavage of dsRNA precursors by DICER1 already contain a 5'-phosphate group, so this protein may be dispensible for normal RNA-mediated gene silencing. In Homo sapiens (Human), this protein is Polyribonucleotide 5'-hydroxyl-kinase Clp1.